The chain runs to 337 residues: Phenylalanine--tRNA ligase alpha subunit (337 aa).

Position 252 (E252) interacts with Mg(2+).

It belongs to the class-II aminoacyl-tRNA synthetase family. Phe-tRNA synthetase alpha subunit type 1 subfamily. Tetramer of two alpha and two beta subunits. Mg(2+) serves as cofactor.

It is found in the cytoplasm. It catalyses the reaction tRNA(Phe) + L-phenylalanine + ATP = L-phenylalanyl-tRNA(Phe) + AMP + diphosphate + H(+). The chain is Phenylalanine--tRNA ligase alpha subunit from Francisella tularensis subsp. holarctica (strain OSU18).